The primary structure comprises 449 residues: Exodeoxyribonuclease 7 large subunit (449 aa).

Belongs to the XseA family. Heterooligomer composed of large and small subunits.

The protein resides in the cytoplasm. The catalysed reaction is Exonucleolytic cleavage in either 5'- to 3'- or 3'- to 5'-direction to yield nucleoside 5'-phosphates.. Its function is as follows. Bidirectionally degrades single-stranded DNA into large acid-insoluble oligonucleotides, which are then degraded further into small acid-soluble oligonucleotides. In Salmonella agona (strain SL483), this protein is Exodeoxyribonuclease 7 large subunit.